Consider the following 262-residue polypeptide: Fibroin light chain (262 aa).

An N-terminal signal peptide occupies residues 1 to 16 (MKPIFLVLLVATSAYA). Serine 19 carries the post-translational modification N-acetylserine; in short form. Residues cysteine 101 and cysteine 160 are joined by a disulfide bond.

As to quaternary structure, silk fibroin elementary unit consists in a disulfide-linked heavy and light chain and a p25 glycoprotein in molar ratios of 6:6:1. This results in a complex of approximately 2.3 MDa. Post-translationally, the interchain disulfide bridge is essential for the intracellular transport and secretion of fibroin. In terms of processing, partially N-terminally processed to yield a short form which lacks the first two residues of the long form. As to expression, produced exclusively in the posterior (PSG) section of silk glands, which are essentially modified salivary glands.

Its subcellular location is the secreted. In terms of biological role, it is likely that the major role of L-chain is to prevent the retention of H-chain in ER by forming the disulfide linkage. The protein is Fibroin light chain (FIBL) of Bombyx mori (Silk moth).